The sequence spans 87 residues: Large ribosomal subunit protein bL27 (87 aa).

Positions 1–22 (MAHKKAGGSSRNGRDSQGQRRG) are disordered.

This sequence belongs to the bacterial ribosomal protein bL27 family.

The chain is Large ribosomal subunit protein bL27 from Nitratidesulfovibrio vulgaris (strain DP4) (Desulfovibrio vulgaris).